We begin with the raw amino-acid sequence, 330 residues long: MISFSSFYRQIADTQLQHWLESLPAILGEWQRQHKHGNLPKWEKVLAKLHYPAPEFLDLKDSVTIGDGLQLDSGQTEKLENLLKILQPWRKGPFHVHGIHIDTEWRSDWKWDRVSPHLSPLTNRTVLDVGCGSGYHMWRMLGAGAKRVVGIDPSALFLCQFEAIKRLIDTELPVHLLPLGIEELPPLDAFDTVFSMGVLYHRRSPIDHLLQLRDQLRMGGELVLETLVVDGDKDTVLVPQDRYGKMNNVWFLPSIDALKLWLEKCDFTDVRCVNVDVTSLAEQRSTPWMQNESLVDYLDPKDVNLTVEGYPAPKRATFIAVKNRSPQDAD.

Carboxy-S-adenosyl-L-methionine-binding positions include lysine 91, tryptophan 105, lysine 110, glycine 130, 152–154, 181–182, methionine 196, tyrosine 200, and arginine 315; these read DPS and IE.

This sequence belongs to the class I-like SAM-binding methyltransferase superfamily. CmoB family. As to quaternary structure, homotetramer.

The enzyme catalyses carboxy-S-adenosyl-L-methionine + 5-hydroxyuridine(34) in tRNA = 5-carboxymethoxyuridine(34) in tRNA + S-adenosyl-L-homocysteine + H(+). Its function is as follows. Catalyzes carboxymethyl transfer from carboxy-S-adenosyl-L-methionine (Cx-SAM) to 5-hydroxyuridine (ho5U) to form 5-carboxymethoxyuridine (cmo5U) at position 34 in tRNAs. This chain is tRNA U34 carboxymethyltransferase, found in Shewanella amazonensis (strain ATCC BAA-1098 / SB2B).